We begin with the raw amino-acid sequence, 1788 residues long: Protein TIC 214 (1788 aa).

6 consecutive transmembrane segments (helical) span residues 25–45, 70–90, 95–115, 132–152, 180–200, and 223–243; these read IINSVVVVGLYYGFFTTFSIG, IGFIAGQLMMFISIYYAPLHL, PHTITALVLPYLLFHFFWNNH, LNIQCIFLNSLIFQLFNHFIL, VGWLVGHIFFMKWVELVLFWI, and IFSILLFIVCIYYLGRMPSPL. Disordered stretches follow at residues 248-297 and 1482-1526; these read LKKT…EEKE and DLEN…DFDR. Basic and acidic residues-rich tracts occupy residues 253–277 and 1513–1526; these read KREERGKNKEETDVEIEKISEEKGT and PLKKQTDGKEDFDR.

Belongs to the TIC214 family. Part of the Tic complex.

Its subcellular location is the plastid. The protein resides in the chloroplast inner membrane. In terms of biological role, involved in protein precursor import into chloroplasts. May be part of an intermediate translocation complex acting as a protein-conducting channel at the inner envelope. This is Protein TIC 214 from Ranunculus macranthus (Large buttercup).